The following is a 505-amino-acid chain: tRNA (guanine(6)-N(2))-methyltransferase THUMP3 (505 aa).

The interval 145–182 (KAKRRKANQSAGKEKADCGQGDKADEKDGKKKHASSTS) is disordered. Residues 156 to 173 (GKEKADCGQGDKADEKDG) show a composition bias toward basic and acidic residues. The region spanning 171-287 (KDGKKKHASS…DNEVIVAIAL (117 aa)) is the THUMP domain.

The protein belongs to the methyltransferase superfamily. As to quaternary structure, part of the heterodimeric THUMPD3-TRM112 methyltransferase complex; this complex forms an active tRNA methyltransferase, where TRMT112 acts as an activator of the catalytic subunit THUMPD3. Ubiquitously expressed. Abundantly expressed in the testis, also expressed in the brain, heart, kidney, liver, lung, muscle and spleen.

It localises to the cytoplasm. The catalysed reaction is guanosine(6) in tRNA + S-adenosyl-L-methionine = N(2)-methylguanosine(6) in tRNA + S-adenosyl-L-homocysteine + H(+). It carries out the reaction guanosine(7) in tRNA + S-adenosyl-L-methionine = N(2)-methylguanosine(7) in tRNA + S-adenosyl-L-homocysteine + H(+). Functionally, catalytic subunit of the THUMPD3-TRM112 methyltransferase complex, that specifically mediates the S-adenosyl-L-methionine-dependent N(2)-methylation of guanosine nucleotide at position 6 (m2G6) in tRNAs. This is one of the major tRNA (guanine-N(2))-methyltransferases. Also catalyzes the S-adenosyl-L-methionine-dependent N(2)-methylation of guanosine nucleotide at position 7 of tRNA(Trp). This Mus musculus (Mouse) protein is tRNA (guanine(6)-N(2))-methyltransferase THUMP3.